The primary structure comprises 455 residues: MSSPIQEQVQKEKRSNIPSISEMKVIPVAGHDSMLLNLSGAHSPFFTRNIVILTDSSGNQGVGEVPGGEHIRRTLELSEPLVVGKSIGAYQAILQTVRKQFGDQDRGGRGNQTFDLRTTVHAVTALEAALLDLLGKFLQEPVAALLGEGKQRDEVKMLGYLFYIGDRNRTTLPYQSDEQSDCAWFRLRHEEALTPEAIVRLAESAQERYGFQDFKLKGGVLRGEEEIEAVTALSKRFPEARITLDPNGAWSLEEAIALCKGKQDVLAYAEDPCGDENGYSAREVMAEFRRATGLPTATNMIATDWREMGHAIQLHAVDIPLADPHFWTMQGSVRVAQMCHDWGLTWGSHSNNHFDISLAMFTHVAAAAPGRITAIDTHWIWQDGQRLTKQPFEISSGCVKVPDKPGLGVDIDMEQVEKAHEIYRKMNLGARNDAIPMQFLISNWEFDRKRPCLVR.

The substrate site is built by His-42, Thr-113, Tyr-160, and Lys-215. The Proton acceptor role is filled by Lys-217. Residues Asp-245, Glu-276, and Asn-299 each contribute to the Mg(2+) site. A substrate-binding site is contributed by 245 to 247 (DPN). Substrate contacts are provided by residues Asn-299, 349 to 351 (HSN), His-378, and Arg-431. Catalysis depends on His-349, which acts as the Proton acceptor.

The protein belongs to the mandelate racemase/muconate lactonizing enzyme family. GlucD subfamily. The cofactor is Mg(2+).

It carries out the reaction D-glucarate = 5-dehydro-4-deoxy-D-glucarate + H2O. It participates in carbohydrate acid metabolism; D-glucarate degradation; 2,5-dioxopentanoate from D-glucarate: step 1/2. Functionally, catalyzes the dehydration of glucarate to 5-keto-4-deoxy-D-glucarate (5-kdGluc). In Bacillus subtilis (strain 168), this protein is Probable glucarate dehydratase (gudD).